Here is a 428-residue protein sequence, read N- to C-terminus: Adenosylhomocysteinase (428 aa).

Substrate is bound by residues T62, D134, and E159. Residue 160-162 (TTT) coordinates NAD(+). K189 and D193 together coordinate substrate. NAD(+) is bound by residues N194, 223–228 (GYGWCG), E246, N281, 302–304 (SGH), and N349.

It belongs to the adenosylhomocysteinase family. NAD(+) serves as cofactor.

The protein resides in the cytoplasm. The enzyme catalyses S-adenosyl-L-homocysteine + H2O = L-homocysteine + adenosine. The protein operates within amino-acid biosynthesis; L-homocysteine biosynthesis; L-homocysteine from S-adenosyl-L-homocysteine: step 1/1. May play a key role in the regulation of the intracellular concentration of adenosylhomocysteine. In Gloeobacter violaceus (strain ATCC 29082 / PCC 7421), this protein is Adenosylhomocysteinase.